We begin with the raw amino-acid sequence, 151 residues long: MRKVKPARKLGRTAAHRKATLANLTTQLLVYKRIETTEAKAKETRKVVEKIITKARKGTVHAQREIFKSIRDKEAVKMLFEDIVSKIGDRNGGYTRIIKLAPRFGDAAKMAVIELVDYAEAPSKQLPGKQDRAKRVKGSKKTEVVAAAAGE.

Belongs to the bacterial ribosomal protein bL17 family. As to quaternary structure, part of the 50S ribosomal subunit. Contacts protein L32.

The sequence is that of Large ribosomal subunit protein bL17 from Chlorobium limicola (strain DSM 245 / NBRC 103803 / 6330).